Reading from the N-terminus, the 398-residue chain is MSSLPAVYIVSSARTPVGSFLGSLSSLTAPQLGAHAIKAALAKVDGLKPSDVQEVFFGNVISANVGQNPARQCALGAGLEESTICTTVNKVCASGLKAIILGAQTIMTGNADVVVAGGTESMSNAPHYLPNLRTGAKYGHQSLVDGIMKDGLTDAGKQELMGLQAEECAQDHGFSREQQDEYAIRTYEKAQAAQKAGLFDEEIAPIQLPGFRGKPDVTVTQDEEPKNLNPEKLRAIKPAFIPGSGTVTAPNSSPLNDGAAAVVLVSEAKLKELNLKPVAKILGWGDAAQQPSKFTTAPALAIPKALKHAGVGQDAIDAFEINEAFSVVALANMKLLGIPEEKVNLHGGAVAIGHPIGASGARILTTLLGVLKAKKGKLGCAGICNGGGGASALVVELL.

Cys92 functions as the Acyl-thioester intermediate in the catalytic mechanism. Residue Tyr187 coordinates K(+). Residues Asn229 and Lys232 each coordinate CoA. K(+) contacts are provided by Ala249, Pro250, and Ser252. Ser253 is a CoA binding site. Val350 contacts K(+). Residues His354 and Cys384 each act as proton acceptor in the active site. Residue Asn385 participates in chloride binding.

Belongs to the thiolase-like superfamily. Thiolase family. Homotetramer. K(+) serves as cofactor.

It is found in the cytoplasm. The protein localises to the cytosol. It catalyses the reaction 2 acetyl-CoA = acetoacetyl-CoA + CoA. It participates in metabolic intermediate biosynthesis; (R)-mevalonate biosynthesis; (R)-mevalonate from acetyl-CoA: step 1/3. With respect to regulation, activity is increased by monovalent cations such as K(+), Rb(+) or Cs(+). Acetyl-CoA acetyltransferase; part of the first module of ergosterol biosynthesis pathway that includes the early steps of the pathway, conserved across all eukaryotes, and which results in the formation of mevalonate from acetyl-coenzyme A (acetyl-CoA). In this module, the cytosolic acetyl-CoA acetyltransferase erg10B catalyzes the formation of acetoacetyl-CoA. The hydroxymethylglutaryl-CoA synthases AFUA_8G07210 and AFUA_3G10660 then condense acetyl-CoA with acetoacetyl-CoA to form HMG-CoA. The rate-limiting step of the early module is the reduction to mevalonate by the 3-hydroxy-3-methylglutaryl-coenzyme A (HMG-CoA) reductases hmg1 and hmg2. Mevalonate is also a precursor for the extracellular siderophore triacetylfusarinine C (TAFC). This is Acetyl-CoA acetyltransferase erg10B, cytosolic from Aspergillus fumigatus (strain CBS 144.89 / FGSC A1163 / CEA10) (Neosartorya fumigata).